The sequence spans 483 residues: Cobyric acid synthase (483 aa).

The GATase cobBQ-type domain occupies 251-438 (ALIVAVPMLP…LHGIFSADRF (188 aa)). Catalysis depends on C333, which acts as the Nucleophile. The active site involves H430.

This sequence belongs to the CobB/CobQ family. CobQ subfamily.

It participates in cofactor biosynthesis; adenosylcobalamin biosynthesis. Catalyzes amidations at positions B, D, E, and G on adenosylcobyrinic A,C-diamide. NH(2) groups are provided by glutamine, and one molecule of ATP is hydrogenolyzed for each amidation. In Brucella abortus (strain S19), this protein is Cobyric acid synthase.